Here is a 215-residue protein sequence, read N- to C-terminus: Orotidine 5'-phosphate decarboxylase (215 aa).

Residues Asp12, Lys34, 60–69, Ser117, 170–180, Gly193, and Arg194 each bind substrate; these read DFKVADIPNT and PGVGAQGGSAA. Lys62 functions as the Proton donor in the catalytic mechanism.

Belongs to the OMP decarboxylase family. Type 1 subfamily. In terms of assembly, homodimer.

It carries out the reaction orotidine 5'-phosphate + H(+) = UMP + CO2. It functions in the pathway pyrimidine metabolism; UMP biosynthesis via de novo pathway; UMP from orotate: step 2/2. Its function is as follows. Catalyzes the decarboxylation of orotidine 5'-monophosphate (OMP) to uridine 5'-monophosphate (UMP). The protein is Orotidine 5'-phosphate decarboxylase of Methanococcoides burtonii (strain DSM 6242 / NBRC 107633 / OCM 468 / ACE-M).